The primary structure comprises 472 residues: Serine incorporator 3 (472 aa).

The Extracellular segment spans residues 1–96 (MGAVLGVFSL…KDCDVLVGFK (96 aa)). N-linked (GlcNAc...) asparagine glycosylation is present at N34. A helical membrane pass occupies residues 97–117 (AVYRINFAVAIFFFAFFLLML). Topologically, residues 118 to 132 (KVKTSKDPRAAVHNG) are cytoplasmic. The helical transmembrane segment at 133–153 (FWFFKIAAIIGIMIGSFYIPG) threads the bilayer. Residues 154 to 158 (GSFTE) are Extracellular-facing. A helical transmembrane segment spans residues 159–179 (VWFVAGMLGASFFIIIQLVLL). Over 180–206 (VDMAHSWNELWVNRMEEGNPRLWYAAL) the chain is Cytoplasmic. The chain crosses the membrane as a helical span at residues 207-227 (LSFTSLFYILSIVFAALLYVF). Over 228 to 238 (YTKPDDCTENK) the chain is Extracellular. A helical membrane pass occupies residues 239-259 (VFISLNLIFCVAVSIVSILPK). The Cytoplasmic portion of the chain corresponds to 260–329 (VQEHQPRSGL…APAYAPPSQS (70 aa)). Residues 330–350 (GHFMNLDDIWGLIIFVFCLIY) form a helical membrane-spanning segment. Residues 351–405 (SSFRTSSNSQVNKLTLSGSDSVILGDTTNGANDEEDGQPRRAVDNEKEGVQYSYS) lie on the Extracellular side of the membrane. A Phosphoserine modification is found at S371. The chain crosses the membrane as a helical span at residues 406-426 (FFHLMLCCASLYIMMTITSWY). Residues 427-445 (SPDAKFQKVSSKWLAVWFK) are Cytoplasmic-facing. The chain crosses the membrane as a helical span at residues 446 to 466 (MGSSWLCLLLYLWTLVAPLVL). Topologically, residues 467-472 (TGRDFS) are extracellular.

The protein belongs to the TDE1 family. In terms of processing, N-glycosylated. In terms of tissue distribution, highly expressed in the neuronal populations such as Purkinje cells in the cerebellum, brainstem and spinal motor neurons, locus coeruleus and raphe nuclei. Highly expressed also in thymus, kidney liver and testis.

The protein resides in the cell membrane. Its subcellular location is the golgi apparatus membrane. The enzyme catalyses a 1,2-diacyl-sn-glycero-3-phospho-L-serine(in) = a 1,2-diacyl-sn-glycero-3-phospho-L-serine(out). It carries out the reaction a 1,2-diacyl-sn-glycero-3-phosphocholine(in) = a 1,2-diacyl-sn-glycero-3-phosphocholine(out). It catalyses the reaction a 1,2-diacyl-sn-glycero-3-phosphoethanolamine(in) = a 1,2-diacyl-sn-glycero-3-phosphoethanolamine(out). Its function is as follows. Restriction factor required to restrict infectivity of gammaretroviruses: acts by inhibiting an early step of viral infection. Impairs the penetration of the viral particle into the cytoplasm. Non-ATP-dependent, non-specific lipid transporter for phosphatidylserine, phosphatidylcholine, and phosphatidylethanolamine. Functions as a scramblase that flips lipids in both directions across the membrane. Phospholipid scrambling results in gammaretroviral surface exposure of phosphatidylserine and loss of membrane asymmetry, which leads to loss of infectivity. This is Serine incorporator 3 (Serinc3) from Mus musculus (Mouse).